A 248-amino-acid polypeptide reads, in one-letter code: NADP-dependent 3-hydroxy acid dehydrogenase YdfG (248 aa).

NADP(+) contacts are provided by residues G7–F12, R32–R33, D54–V55, and N81. S134 lines the substrate pocket. NADP(+)-binding positions include Y147, K151, and P177–F185. Catalysis depends on Y147, which acts as the Proton acceptor.

This sequence belongs to the short-chain dehydrogenases/reductases (SDR) family. In terms of assembly, homotetramer.

The enzyme catalyses 3-hydroxypropanoate + NADP(+) = 3-oxopropanoate + NADPH + H(+). It catalyses the reaction L-allo-threonine + NADP(+) = aminoacetone + CO2 + NADPH. NADP-dependent dehydrogenase with broad substrate specificity acting on 3-hydroxy acids. Catalyzes the NADP-dependent oxidation of L-allo-threonine to L-2-amino-3-keto-butyrate, which is spontaneously decarboxylated into aminoacetone. Also acts on D-threonine, L-serine, D-serine, D-3-hydroxyisobutyrate, L-3-hydroxyisobutyrate, D-glycerate and L-glycerate. Able to catalyze the reduction of the malonic semialdehyde to 3-hydroxypropionic acid. YdfG is apparently supplementing RutE, the presumed malonic semialdehyde reductase involved in pyrimidine degradation since both are able to detoxify malonic semialdehyde. The chain is NADP-dependent 3-hydroxy acid dehydrogenase YdfG from Shigella flexneri.